Reading from the N-terminus, the 122-residue chain is Histone H2B (122 aa).

A disordered region spans residues 1–31 (MPPKPSGKGQKKAGKAKGAPSTNKKRKRKRK). Residue Pro2 is modified to N,N-dimethylproline. An Isoglutamyl lysine isopeptide (Gln-Lys) (interchain with K-5 in histone H4) cross-link involves residue Gln10. O-linked (GlcNAc) serine glycosylation occurs at Ser109. Lys117 is covalently cross-linked (Glycyl lysine isopeptide (Lys-Gly) (interchain with G-Cter in ubiquitin)).

The protein belongs to the histone H2B family. As to quaternary structure, the nucleosome is a histone octamer containing two molecules each of H2A, H2B, H3 and H4 assembled in one H3-H4 heterotetramer and two H2A-H2B heterodimers. The octamer wraps approximately 147 bp of DNA. Monoubiquitination of Lys-117 gives a specific tag for epigenetic transcriptional activation and is also prerequisite for histone H3 'Lys-4' and 'Lys-79' methylation. Post-translationally, glcNAcylation at Ser-109 promotes monoubiquitination of Lys-117. It fluctuates in response to extracellular glucose, and associates with transcribed genes.

The protein resides in the nucleus. Its subcellular location is the chromosome. Core component of nucleosome. Nucleosomes wrap and compact DNA into chromatin, limiting DNA accessibility to the cellular machineries which require DNA as a template. Histones thereby play a central role in transcription regulation, DNA repair, DNA replication and chromosomal stability. DNA accessibility is regulated via a complex set of post-translational modifications of histones, also called histone code, and nucleosome remodeling. This Patiria pectinifera (Starfish) protein is Histone H2B.